Here is an 815-residue protein sequence, read N- to C-terminus: Leucine--tRNA ligase (815 aa).

Positions Pro-42–His-52 match the 'HIGH' region motif. Residues Lys-574–Ser-578 carry the 'KMSKS' region motif. Lys-577 contacts ATP.

The protein belongs to the class-I aminoacyl-tRNA synthetase family.

It localises to the cytoplasm. It catalyses the reaction tRNA(Leu) + L-leucine + ATP = L-leucyl-tRNA(Leu) + AMP + diphosphate. The protein is Leucine--tRNA ligase of Alcanivorax borkumensis (strain ATCC 700651 / DSM 11573 / NCIMB 13689 / SK2).